We begin with the raw amino-acid sequence, 346 residues long: MVSPATTATMSAWQVRRPGPMDTGPLERVTTRVPRPAPSELLVAVHACGVCRTDLHVTEGDLPVHRERVIPGHEVVGEVIEVGSAVGAAAGGEFDRGDRVGIAWLRHTCGVCKYCRRGSENLCPQSRYTGWDADGGYAEFTTVPAAFAHHLPSGYSDSELAPLLCAGIIGYRSLLRTELPPGGRLGLYGFGGSAHITAQVALAQGAEIHVMTRGARARKLALQLGAASAQDAADRPPVPLDAAILFAPVGDLVLPALEALDRGGILAIAGIHLTDIPDLNYQQHLFQERQIRSVTSNTRADARAFFDFAAQHHIEVTTPEYPLGQADRALGDLSAGRIAGAAVLLI.

The Zn(2+) site is built by C51, H73, C109, C112, C115, C123, and C165.

The protein belongs to the zinc-containing alcohol dehydrogenase family. Zn(2+) serves as cofactor.

The catalysed reaction is a primary alcohol + NAD(+) = an aldehyde + NADH + H(+). The enzyme catalyses a secondary alcohol + NAD(+) = a ketone + NADH + H(+). In Mycobacterium tuberculosis (strain CDC 1551 / Oshkosh), this protein is Probable alcohol dehydrogenase AdhA (adhA).